A 97-amino-acid chain; its full sequence is MNKIIAALVLFTAVIGALADYPAPPPPPPKPYHAPPPPPYHAPPHHAPAPLHPVVHTYPVKAPAAKCGANLLVGCAPSVAHVPCVPVHPHPPPPAHY.

Residues 1-19 (MNKIIAALVLFTAVIGALA) form the signal peptide. Residues 20-23 (DYPA) form a required for binding to the gut receptor region. The segment at 26-46 (PPPPKPYHAPPPPPYHAPPHH) is disordered. The region spanning 61–97 (KAPAAKCGANLLVGCAPSVAHVPCVPVHPHPPPPAHY) is the VM domain.

It belongs to the vitelline membrane protein family. In terms of tissue distribution, expressed in the anterior region of the follicle cells.

It is found in the secreted. Has an oostatic activity. Inhibits trypsin biosynthesis in the midgut epithelial cells which indirectly reduces the vitellogenin concentration in the hemolymph resulting in inhibition of oocyte development. This is Vitelline membrane protein 15a-2 (15a-2) from Aedes aegypti (Yellowfever mosquito).